The following is a 503-amino-acid chain: MSQLKLEEISSVIEEKIKNFELDCDMAEVGKVVSYADGVAKVYGLNGVMSYEVLEFETGDKGVAANLEEDSVGVIVFGFGNNIKEGTSVKRTKSLMKVPVGDAVVGRVLNALGEPIDGKGEIETNEFSLIEQKAPGIMDRKSVHEPLQTGIKAIDALVPIGRGQRELIIGDKQTGKTTVAIDAIINQKGQNVICIYVAIGQKESTVAQVVRKLEEYGAMEYSVVINASASDSAAMQYLAPYSGVAMGEYFRDHARHALIIYDDLSKHAVAYREISLILRRPPGREAFPGDVFYIHSRLLERAAKLCDEKGAGSLTALPIVETQAGDVSAYIPTNIISITDGQIFLETDLFYSGIRPAINVGLSVSRVGGAAQIKATKQVSGTLRLDLAQYRELQAFTQFASDLDEASKKQLERGQRMVEVLKQAPYSPLPIEKQVVIIYAGAKGFLDSVSVKKVVDFEEQLHPFLEAKYPQVLEEIHTKKVLDKDLEAMLRKVLEEFKLTYSE.

Residue 170 to 177 (GDKQTGKT) participates in ATP binding.

Belongs to the ATPase alpha/beta chains family. In terms of assembly, F-type ATPases have 2 components, CF(1) - the catalytic core - and CF(0) - the membrane proton channel. CF(1) has five subunits: alpha(3), beta(3), gamma(1), delta(1), epsilon(1). CF(0) has three main subunits: a(1), b(2) and c(9-12). The alpha and beta chains form an alternating ring which encloses part of the gamma chain. CF(1) is attached to CF(0) by a central stalk formed by the gamma and epsilon chains, while a peripheral stalk is formed by the delta and b chains.

The protein resides in the cell inner membrane. The enzyme catalyses ATP + H2O + 4 H(+)(in) = ADP + phosphate + 5 H(+)(out). Its function is as follows. Produces ATP from ADP in the presence of a proton gradient across the membrane. The alpha chain is a regulatory subunit. The sequence is that of ATP synthase subunit alpha from Helicobacter pylori (strain Shi470).